Consider the following 239-residue polypeptide: Eukaryotic translation initiation factor 6 (239 aa).

This sequence belongs to the eIF-6 family. Monomer. Associates with the 60S ribosomal subunit.

It localises to the cytoplasm. The protein localises to the nucleus. The protein resides in the nucleolus. In terms of biological role, binds to the 60S ribosomal subunit and prevents its association with the 40S ribosomal subunit to form the 80S initiation complex in the cytoplasm. May also be involved in ribosome biogenesis. In Entamoeba dispar (strain ATCC PRA-260 / SAW760), this protein is Eukaryotic translation initiation factor 6.